An 823-amino-acid polypeptide reads, in one-letter code: DNA topoisomerase 4 subunit A (823 aa).

The region spanning 30–496 is the Topo IIA-type catalytic domain; sequence LPDIRDGLKP…KAIEIDTASL (467 aa). Tyrosine 118 acts as the O-(5'-phospho-DNA)-tyrosine intermediate in catalysis.

It belongs to the type II topoisomerase GyrA/ParC subunit family. ParC type 2 subfamily. Heterotetramer composed of ParC and ParE.

The protein localises to the cell membrane. The enzyme catalyses ATP-dependent breakage, passage and rejoining of double-stranded DNA.. With respect to regulation, inhibited by quinolones, such as levofloxacin. Topoisomerase IV is essential for chromosome segregation. It relaxes supercoiled DNA. Performs the decatenation events required during the replication of a circular DNA molecule. This is DNA topoisomerase 4 subunit A from Streptococcus pneumoniae serotype 4 (strain ATCC BAA-334 / TIGR4).